The chain runs to 231 residues: Acyl-protein thioesterase 1 (231 aa).

Catalysis depends on charge relay system residues Ser-121, Asp-178, and His-211.

Belongs to the AB hydrolase superfamily. AB hydrolase 2 family.

Its subcellular location is the cytoplasm. The protein localises to the nucleus. The catalysed reaction is S-hexadecanoyl-L-cysteinyl-[protein] + H2O = L-cysteinyl-[protein] + hexadecanoate + H(+). Hydrolyzes fatty acids from S-acylated cysteine residues in proteins with a strong preference for palmitoylated G-alpha proteins over other acyl substrates. Mediates the deacylation of G-alpha proteins such as GPA1 in vivo, but has weak or no activity toward palmitoylated Ras proteins. Has weak lysophospholipase activity in vitro; however such activity may not exist in vivo. The chain is Acyl-protein thioesterase 1 from Candida albicans (strain SC5314 / ATCC MYA-2876) (Yeast).